Consider the following 921-residue polypeptide: DNA mismatch repair protein MutS 1 (921 aa).

619 to 626 (GPNMSGKS) serves as a coordination point for ATP. The tract at residues 837–887 (FRDGAAQSGGAAAGSTAEPVATDGDPEHAPGEAAAEGPKGDERAASLDSET) is disordered. A compositionally biased stretch (low complexity) spans 840–853 (GAAQSGGAAAGSTA).

Belongs to the DNA mismatch repair MutS family.

Functionally, this protein is involved in the repair of mismatches in DNA. It is possible that it carries out the mismatch recognition step. This protein has a weak ATPase activity. This chain is DNA mismatch repair protein MutS 1, found in Haloarcula marismortui (strain ATCC 43049 / DSM 3752 / JCM 8966 / VKM B-1809) (Halobacterium marismortui).